Reading from the N-terminus, the 330-residue chain is tRNA pseudouridine synthase B (330 aa).

Asp-42 functions as the Nucleophile in the catalytic mechanism.

It belongs to the pseudouridine synthase TruB family. Type 1 subfamily.

The enzyme catalyses uridine(55) in tRNA = pseudouridine(55) in tRNA. Functionally, responsible for synthesis of pseudouridine from uracil-55 in the psi GC loop of transfer RNAs. This Lactococcus lactis subsp. cremoris (strain SK11) protein is tRNA pseudouridine synthase B.